The following is a 130-amino-acid chain: Small ribosomal subunit protein uS8 (130 aa).

The protein belongs to the universal ribosomal protein uS8 family. In terms of assembly, part of the 30S ribosomal subunit. Contacts proteins S5 and S12.

In terms of biological role, one of the primary rRNA binding proteins, it binds directly to 16S rRNA central domain where it helps coordinate assembly of the platform of the 30S subunit. In Alcanivorax borkumensis (strain ATCC 700651 / DSM 11573 / NCIMB 13689 / SK2), this protein is Small ribosomal subunit protein uS8.